We begin with the raw amino-acid sequence, 200 residues long: THO complex subunit tho5 (200 aa).

This sequence belongs to the THOC5 family. Component of the THO and TREX complexes.

The protein resides in the cytoplasm. It localises to the nucleus. Component the THO subcomplex of the TREX complex, which operates in coupling transcription elongation to mRNA export. The THO complex is recruited to transcribed genes and moves along the gene with the elongating polymerase during transcription. THO is important for stabilizing nascent RNA in the RNA polymerase II elongation complex by preventing formation of DNA:RNA hybrids behind the elongating polymerase. The THO complex is also required to maintain TRAMP complex occupancy at sites of snoRNA transcription thus promoting exosome-mediated degradation of snoRNA precursors. The protein is THO complex subunit tho5 of Schizosaccharomyces pombe (strain 972 / ATCC 24843) (Fission yeast).